The sequence spans 296 residues: MSDKHINLVIVTGMSGAGKTVAIQSFEDLGYFTIDNMPPALVPKFLELIEQTNENRRVALVVDMRSRLFFKEINSTLDSIESNPSIDFWILFLDATDGELVSRYKETRRSHPLAADGRVLDGIRLERELLSPLKSMSQHVVDTTKLTPRQLRKTISDQFSEGSNQASFRIEVMSFGFKYGLPLDADLVFDVRFLPNPYYQVELREKTGLDEDVFNYVMSHPESEVFYKHLLNLIVPILPAYQKEGKSVLTVAIGCTGGQHRSVAFAHCLAESLATDWSVNESHRDQNRRKETVNRS.

Residue G13 to T20 participates in ATP binding. D63–S66 contacts GTP.

Belongs to the RapZ-like family.

Displays ATPase and GTPase activities. The polypeptide is Nucleotide-binding protein spyM18_0713 (Streptococcus pyogenes serotype M18 (strain MGAS8232)).